The sequence spans 484 residues: MGAFLDKPKTEKHNAHGAGNGLRYGLSSMQGWRVEMEDAHTAVVGIPHGLEDWSFFAVYDGHAGSRVANYCSTHLLEHITNNEDFRAAGKSGSALEPSVENVKNGIRTGFLKIDEYMRNFSDLRNGMDRSGSTAVGVMISPKHIYFINCGDSRAVLYRSGQVCFSTQDHKPCNPREKERIQNAGGSVMIQRVNGSLAVSRALGDYDYKCVDGKGPTEQLVSPEPEVYEILRAEEDEFIILACDGIWDVMSNEELCEFVKSRLEVSDDLENVCNWVVDTCLHKGSRDNMSIVLVCFSNAPKVSDEAMRKDSELDKYLESRVEEIMEKSGEEGMPDLAHVMRILSAENIPNLPPGGGLAGNIIFFRRHVIEAVYSRLNPHRESDGASDEAEESGSQGKLVEALRQMRINHRGNYRQLLEEMLTSYRLAKVEGEENPAEQAATAASSNSDAGNTVAMQESHTESKSDLAELDSCTEDAGTKMSGEKL.

Positions 1–14 (MGAFLDKPKTEKHN) are enriched in basic and acidic residues. A disordered region spans residues 1–20 (MGAFLDKPKTEKHNAHGAGN). Glycine 2 is lipidated: N-myristoyl glycine. Lysine 12 participates in a covalent cross-link: Glycyl lysine isopeptide (Lys-Gly) (interchain with G-Cter in ISG15). The PPM-type phosphatase domain maps to 23–295 (RYGLSSMQGW…DNMSIVLVCF (273 aa)). Aspartate 60 and glycine 61 together coordinate Mn(2+). Lysine 142 participates in a covalent cross-link: Glycyl lysine isopeptide (Lys-Gly) (interchain with G-Cter in ISG15). Residues aspartate 243 and aspartate 286 each coordinate Mn(2+). Serine 391 carries the phosphoserine modification. Residues 431-484 (EENPAEQAATAASSNSDAGNTVAMQESHTESKSDLAELDSCTEDAGTKMSGEKL) are disordered. The span at 440-456 (TAASSNSDAGNTVAMQE) shows a compositional bias: polar residues.

This sequence belongs to the PP2C family. Monomer. Interacts with PAK6. Interacts with the phosphorylated form of IKBKB/IKKB. The cofactor is Mg(2+). Mn(2+) serves as cofactor. Post-translationally, isgylation negatively regulates its activity. N-myristoylation is essential for the recognition of its substrates for dephosphorylation.

The protein localises to the cytoplasm. It localises to the cytosol. The protein resides in the membrane. It catalyses the reaction O-phospho-L-seryl-[protein] + H2O = L-seryl-[protein] + phosphate. The enzyme catalyses O-phospho-L-threonyl-[protein] + H2O = L-threonyl-[protein] + phosphate. Functionally, enzyme with a broad specificity. Dephosphorylates PRKAA1 and PRKAA2. Inhibits TBK1-mediated antiviral signaling by dephosphorylating it at 'Ser-172'. Plays an important role in the termination of TNF-alpha-mediated NF-kappa-B activation through dephosphorylating and inactivating IKBKB/IKKB. This chain is Protein phosphatase 1B (PPM1B), found in Bos taurus (Bovine).